The following is a 392-amino-acid chain: Nucleosome assembly protein 1-like 1-A (392 aa).

The interval 1–37 (MANIDNKGQTELDQQDMEDVEDVEEEETGEDANSKAR) is disordered. Residues 13–30 (DQQDMEDVEDVEEEETGE) are compositionally biased toward acidic residues. The short motif at 126-150 (YEPTEEECEWKVEEEDISGDLKEKA) is the NAP1L motif element. The Nuclear localization signal signature appears at 273–279 (IKKKQKH). Residues 346–377 (AIEDDDDDYDEEGEEADDEEGEEEADEDNDPD) show a composition bias toward acidic residues. Residues 346–392 (AIEDDDDDYDEEGEEADDEEGEEEADEDNDPDYEPKKGQNPAECKQQ) form a disordered region.

It belongs to the nucleosome assembly protein (NAP) family. In terms of assembly, forms homomultimers. Interacts with histone B4. Interacts with the B-type cyclins ccnb1 and ccnb2. Phosphorylated by cyclin B-cdc2 kinase complexes. As to expression, initially expressed throughout the embryo with expression higher at the animal pole. Becomes localized to presumptive ectoderm by gastrula stages. By stage 18 (neurula), expressed in the neural plate and posterior to the cement gland. In late neurula/early tailbud stages, expressed in the neural crest, neural tube, eyes, tailbud and ventral blood islands. Adult expression is predominantly in ovaries.

Its subcellular location is the cytoplasm. The protein localises to the nucleus. Functionally, acts as a chaperone for the linker histone to facilitate deposition of histone B4 onto linker DNA. Required for both remodeling of sperm chromatin into nucleosomes, and linker histone binding to nucleosome core dimers. Plays a role in tissue-specific gene regulation. Required for primitive hemopoiesis, acting upstream of tal1/scl. The protein is Nucleosome assembly protein 1-like 1-A (nap1l1-a) of Xenopus laevis (African clawed frog).